The primary structure comprises 144 residues: Maximins 10/H15 (144 aa).

The N-terminal stretch at 1-18 (MNFKYIVAVSFLIASAYA) is a signal peptide. A propeptide spanning residues 19-43 (RSVQNDEQSLSQRDVLEEESLREIR) is cleaved from the precursor. At S70 the chain carries Serine amide. Residues 74–123 (TAEDHEVMKRLEAVMRDLDSLDYPEEATERETRGFNQEEIANLFTKKEKR) constitute a propeptide that is removed on maturation. L143 is modified (leucine amide).

The protein belongs to the bombinin family. Expressed by the skin glands.

The protein resides in the secreted. In terms of biological role, maximin-10 shows antimicrobial activity against bacteria and against the fungus C.albicans. It has little hemolytic activity. Maximin-H15 shows antimicrobial activity against bacteria and against the fungus C.albicans. Shows strong hemolytic activity. This is Maximins 10/H15 from Bombina maxima (Giant fire-bellied toad).